Consider the following 187-residue polypeptide: ATP synthase subunit delta (187 aa).

Belongs to the ATPase delta chain family. As to quaternary structure, F-type ATPases have 2 components, F(1) - the catalytic core - and F(0) - the membrane proton channel. F(1) has five subunits: alpha(3), beta(3), gamma(1), delta(1), epsilon(1). F(0) has three main subunits: a(1), b(2) and c(10-14). The alpha and beta chains form an alternating ring which encloses part of the gamma chain. F(1) is attached to F(0) by a central stalk formed by the gamma and epsilon chains, while a peripheral stalk is formed by the delta and b chains.

The protein resides in the cell inner membrane. Functionally, f(1)F(0) ATP synthase produces ATP from ADP in the presence of a proton or sodium gradient. F-type ATPases consist of two structural domains, F(1) containing the extramembraneous catalytic core and F(0) containing the membrane proton channel, linked together by a central stalk and a peripheral stalk. During catalysis, ATP synthesis in the catalytic domain of F(1) is coupled via a rotary mechanism of the central stalk subunits to proton translocation. In terms of biological role, this protein is part of the stalk that links CF(0) to CF(1). It either transmits conformational changes from CF(0) to CF(1) or is implicated in proton conduction. The chain is ATP synthase subunit delta from Leptospira biflexa serovar Patoc (strain Patoc 1 / Ames).